A 366-amino-acid polypeptide reads, in one-letter code: Aldo-keto reductase AFTS1 (366 aa).

D75 contacts NADP(+). Catalysis depends on Y80, which acts as the Proton donor. Residue H172 participates in substrate binding. NADP(+) is bound by residues 202 to 203 (SS), Q228, 257 to 267 (GSLASGRLARP), and 329 to 337 (SSVERIDEA).

This sequence belongs to the aldo/keto reductase family.

It participates in mycotoxin biosynthesis. Functionally, aldo-keto reductase; part of the gene clusters that mediate the biosynthesis of the host-selective toxins (HSTs) AF-toxins responsible for Alternaria black spot of strawberry disease by the strawberry pathotype. AF-toxin I and III are valine derivatives of 2,3-dyhydroxy-isovaleric acid and 2-hydroxy-isovaleric acid respectively, while AF II is an isoleucine derivative of 2-hydroxy-valeric acid. These derivatives are bound to a 9,10-epoxy-8-hydroxy-9-methyl-decatrienoic acid (EDA) moiety. On cellular level, AF-toxins affect plasma membrane of susceptible cells and cause a sudden increase in loss of K(+) after a few minutes of toxin treatment. The aldo-keto reductase AFTS1 catalyzes the conversion of 2-keto-isovaleric acid (2-KIV) to 2-hydroxy-isovaleric acid (2-HIV) by reduction of its ketone to an alcohol. The acyl-CoA ligase AFT1, the hydrolase AFT2 and the enoyl-CoA hydratases AFT3 and AFT6, but also the polyketide synthase AFT9, the acyl-CoA dehydrogenase AFT10, the cytochrome P450 monooxygenase AFT11 and the oxidoreductase AFT12 are all involved in the biosynthesis of the AK-, AF- and ACT-toxin common EDA structural moiety. The exact function of each enzyme, and of additional enzymes identified within the AF-toxin clusters have still to be determined. The sequence is that of Aldo-keto reductase AFTS1 from Alternaria alternata (Alternaria rot fungus).